A 336-amino-acid chain; its full sequence is Hdr-like menaquinol oxidoreductase cytochrome b-like subunit (336 aa).

6 consecutive transmembrane segments (helical) span residues 4 to 24 (ALYI…IGTI), 60 to 80 (IDSP…VFLF), 102 to 122 (WLWL…IRHL), 145 to 165 (VAIV…LAFL), 184 to 204 (HLIL…RYII), and 232 to 252 (LHWL…YIPF).

The protein localises to the cell membrane. Its function is as follows. Has menaquinol-oxidizing activity. The HmeC and HmeD subunits may together mediate electron transfer from menaquinol to an unidentified electron acceptor on the cytoplasmic side of the membrane. The protein is Hdr-like menaquinol oxidoreductase cytochrome b-like subunit (hmeC) of Archaeoglobus profundus (strain DSM 5631 / JCM 9629 / NBRC 100127 / Av18).